Reading from the N-terminus, the 255-residue chain is Small ribosomal subunit protein uS2 (255 aa).

The disordered stretch occupies residues 232–255 (ASGRDIGASEEAPIEPALEDEAGA).

This sequence belongs to the universal ribosomal protein uS2 family.

The polypeptide is Small ribosomal subunit protein uS2 (Agrobacterium fabrum (strain C58 / ATCC 33970) (Agrobacterium tumefaciens (strain C58))).